The chain runs to 513 residues: Interferon-induced, double-stranded RNA-activated protein kinase (513 aa).

Alanine 2 is subject to N-acetylalanine. One can recognise a DRBM 1 domain in the interval phenylalanine 8–asparagine 76. A Glycyl lysine isopeptide (Lys-Gly) (interchain with G-Cter in ISG15) cross-link involves residue lysine 68. Residue serine 82 is modified to Phosphoserine. Threonine 84 carries the post-translational modification Phosphothreonine. In terms of domain architecture, DRBM 2 spans asparagine 95–glutamate 162. Tyrosine 96 is subject to Phosphotyrosine; by autocatalysis. Residue lysine 154 forms a Glycyl lysine isopeptide (Lys-Gly) (interchain with G-Cter in ISG15) linkage. The residue at position 157 (tyrosine 157) is a Phosphotyrosine; by autocatalysis. Phosphothreonine is present on threonine 227. The interaction with TRAF5 stretch occupies residues aspartate 235–cysteine 513. One can recognise a Protein kinase domain in the interval phenylalanine 236 to lysine 502. Isoleucine 242–valine 250 contributes to the ATP binding site. Position 262 is a phosphotyrosine; by autocatalysis (tyrosine 262). Lysine 265 contributes to the ATP binding site. The active-site Proton acceptor is aspartate 373. Phosphothreonine; by autocatalysis is present on residues threonine 406 and threonine 411. Position 416 is a phosphoserine (serine 416).

It belongs to the protein kinase superfamily. Ser/Thr protein kinase family. GCN2 subfamily. In terms of assembly, homodimer. Interacts with DNAJC3. Interacts with STRBP. Forms a complex with FANCA, FANCC, FANCG and HSP70. Interacts with ADAR/ADAR1. The inactive form interacts with NCK1 and GSN. Interacts (via the kinase catalytic domain) with STAT3 (via SH2 domain), TRAF2 (C-terminus), TRAF5 (C-terminus) and TRAF6 (C-terminus). Interacts with MAP2K6, IKBKB/IKKB, IRS1, NPM1, TARBP2, NLRP1, NLRP3, NLRC4 and AIM2. Interacts (via DRBM 1 domain) with DUS2L (via DRBM domain). Interacts with DHX9 (via N-terminus) and this interaction is dependent upon activation of the kinase. Post-translationally, autophosphorylated on several Ser, Thr and Tyr residues. Autophosphorylation of Thr-411 is dependent on Thr-406 and is stimulated by dsRNA binding and dimerization. Autophosphorylation apparently leads to the activation of the kinase. Tyrosine autophosphorylation is essential for efficient dsRNA-binding, dimerization, and kinase activation.

It localises to the cytoplasm. Its subcellular location is the nucleus. The protein localises to the perinuclear region. The catalysed reaction is L-seryl-[protein] + ATP = O-phospho-L-seryl-[protein] + ADP + H(+). It catalyses the reaction L-threonyl-[protein] + ATP = O-phospho-L-threonyl-[protein] + ADP + H(+). It carries out the reaction L-tyrosyl-[protein] + ATP = O-phospho-L-tyrosyl-[protein] + ADP + H(+). Its activity is regulated as follows. Initially produced in an inactive form and is activated by binding to viral dsRNA, which causes dimerization and autophosphorylation in the activation loop and stimulation of function. ISGylation can activate it in the absence of viral infection. Can also be activated by heparin, pro-inflammatory stimuli, growth factors, cytokines, oxidative stress and the cellular protein PRKRA. Activity is markedly stimulated by manganese ions. Activation is blocked by the cellular proteins TARBP2, DUS2L, NPM1, NCK1 and ADAR. IFN-induced dsRNA-dependent serine/threonine-protein kinase that phosphorylates the alpha subunit of eukaryotic translation initiation factor 2 (EIF2S1/eIF-2-alpha) and plays a key role in the innate immune response to viral infection. Inhibits viral replication via the integrated stress response (ISR): EIF2S1/eIF-2-alpha phosphorylation in response to viral infection converts EIF2S1/eIF-2-alpha in a global protein synthesis inhibitor, resulting to a shutdown of cellular and viral protein synthesis, while concomitantly initiating the preferential translation of ISR-specific mRNAs, such as the transcriptional activator ATF4. Exerts its antiviral activity on a wide range of DNA and RNA viruses. Also involved in the regulation of signal transduction, apoptosis, cell proliferation and differentiation: phosphorylates other substrates including p53/TP53, PPP2R5A, DHX9, ILF3 and IRS1. In addition to serine/threonine-protein kinase activity, also has tyrosine-protein kinase activity and phosphorylates CDK1 at 'Tyr-4' upon DNA damage, facilitating its ubiquitination and proteasomal degradation. Either as an adapter protein and/or via its kinase activity, can regulate various signaling pathways (p38 MAP kinase, NF-kappa-B and insulin signaling pathways) and transcription factors (JUN, STAT1, STAT3, IRF1, ATF3) involved in the expression of genes encoding pro-inflammatory cytokines and IFNs. Activates the NF-kappa-B pathway via interaction with IKBKB and TRAF family of proteins and activates the p38 MAP kinase pathway via interaction with MAP2K6. Can act as both a positive and negative regulator of the insulin signaling pathway (ISP). Negatively regulates ISP by inducing the inhibitory phosphorylation of insulin receptor substrate 1 (IRS1) at 'Ser-312' and positively regulates ISP via phosphorylation of PPP2R5A which activates FOXO1, which in turn up-regulates the expression of insulin receptor substrate 2 (IRS2). Can regulate NLRP3 inflammasome assembly and the activation of NLRP3, NLRP1, AIM2 and NLRC4 inflammasomes. Plays a role in the regulation of the cytoskeleton by binding to gelsolin (GSN), sequestering the protein in an inactive conformation away from actin. This chain is Interferon-induced, double-stranded RNA-activated protein kinase (Eif2ak2), found in Rattus norvegicus (Rat).